We begin with the raw amino-acid sequence, 274 residues long: MGFSGHHARKRFGQHWLLDESVLQRIIEAADLQSTDRVLEVGPGRGALTERLLAAGLKAVHAIELDRDLVQGLRDRFVVQPGFSLHQGDVLEAPLELSDGRIADKVVANIPYNITGPLLERLVGRLDRPVDPPYQRLVLLVQKEVAERIRARPGHSSFSALSVRMQLLARCHSVCPVPPRCFQPPPKVQSEVICLEPLPASERVMPDLAARVESLLKQAFLARRKMLRNTLAGVAEPNRLKDLAASAGFSLQQRPQELAPATWVALARGLNRGD.

S-adenosyl-L-methionine is bound by residues H15, L17, G42, E64, D89, and N109.

Belongs to the class I-like SAM-binding methyltransferase superfamily. rRNA adenine N(6)-methyltransferase family. RsmA subfamily.

The protein localises to the cytoplasm. The catalysed reaction is adenosine(1518)/adenosine(1519) in 16S rRNA + 4 S-adenosyl-L-methionine = N(6)-dimethyladenosine(1518)/N(6)-dimethyladenosine(1519) in 16S rRNA + 4 S-adenosyl-L-homocysteine + 4 H(+). In terms of biological role, specifically dimethylates two adjacent adenosines (A1518 and A1519) in the loop of a conserved hairpin near the 3'-end of 16S rRNA in the 30S particle. May play a critical role in biogenesis of 30S subunits. This chain is Ribosomal RNA small subunit methyltransferase A, found in Synechococcus sp. (strain CC9605).